The sequence spans 304 residues: ATP synthase gamma chain (304 aa).

This sequence belongs to the ATPase gamma chain family. As to quaternary structure, F-type ATPases have 2 components, CF(1) - the catalytic core - and CF(0) - the membrane proton channel. CF(1) has five subunits: alpha(3), beta(3), gamma(1), delta(1), epsilon(1). CF(0) has three main subunits: a, b and c.

The protein localises to the cell membrane. Produces ATP from ADP in the presence of a proton gradient across the membrane. The gamma chain is believed to be important in regulating ATPase activity and the flow of protons through the CF(0) complex. This Mycobacterium ulcerans (strain Agy99) protein is ATP synthase gamma chain.